A 324-amino-acid chain; its full sequence is Probable cell division protein WhiA (324 aa).

A DNA-binding region (H-T-H motif) is located at residues threonine 276 to asparagine 310.

It belongs to the WhiA family.

Involved in cell division and chromosome segregation. The chain is Probable cell division protein WhiA from Shouchella clausii (strain KSM-K16) (Alkalihalobacillus clausii).